The following is a 642-amino-acid chain: MPVIRFYDGSQQVYEHSVSLIEIIKNKKPSIMKSLIAISVNNHFSNLNTFIREDAFIEFVDQKNYKALNIIRYSCAQLLSYAIKNIWPLAQIATSNIIEDGFYCDIDFKRSISEKDLILLENQMKMLVKREYNILNKLISYSEAREIFQKCFEKYKVSLIDENINCNSKVSLYYHENYADIDIGLQVFNIKFCKYFKLQKIGGVYWKKNKNNKMLQRIYGTAWTNKQELDKHLDYLNELEKRDHRKIGKFLQLYHMQEESPGMIFWHNKGWIIFNELQNFVRVKLKEYKYEEVKTPLLIDKLIWKQSGHWDNYKNAIFTTLSEHREYCIKPMNCPGHVQIFNSRLKSYRDLPIRMAEFGSCHRNEPSGSLHGLMRVRNFTQDDAHIFCTREQVRSEINDCIKMIYDLYSTFHFKKILVKLSTRPEKRIGTDSLWNESEKDLSDMLIENHLSFEYQSGEGAFYGPKIEFILQDSLDRNWQCGTIQLDFYLPLRLSSFYINEKNEKKVPVIIHRAILGSIERFIGILIEECSGNLPTWLSPVQVVIISITDISSGYVKELFKKFSDVNIRIECDLRNEKIGFKIREHTLRRIPYILICGEKESSSKKISVRNRQGHNFGMIDVDFFIKKLQKEIITRNFYQMEE.

The 61-residue stretch at 1-61 (MPVIRFYDGS…REDAFIEFVD (61 aa)) folds into the TGS domain. The interval 243–534 (DHRKIGKFLQ…LIEECSGNLP (292 aa)) is catalytic. Zn(2+) is bound by residues C334, H385, and H511.

Belongs to the class-II aminoacyl-tRNA synthetase family. In terms of assembly, homodimer. It depends on Zn(2+) as a cofactor.

It localises to the cytoplasm. The catalysed reaction is tRNA(Thr) + L-threonine + ATP = L-threonyl-tRNA(Thr) + AMP + diphosphate + H(+). Its function is as follows. Catalyzes the attachment of threonine to tRNA(Thr) in a two-step reaction: L-threonine is first activated by ATP to form Thr-AMP and then transferred to the acceptor end of tRNA(Thr). Also edits incorrectly charged L-seryl-tRNA(Thr). The sequence is that of Threonine--tRNA ligase from Buchnera aphidicola subsp. Acyrthosiphon pisum (strain APS) (Acyrthosiphon pisum symbiotic bacterium).